The primary structure comprises 334 residues: Cytoskeleton protein RodZ (334 aa).

The Cytoplasmic portion of the chain corresponds to 1 to 111 (MNTEATHDQN…LGKRRKKRDG (111 aa)). The 53-residue stretch at 19-71 (LRNAREQLGLSQQAVAERLCLKVSTVRDIEEDKAPSDLASTFLRGYIRSYARL) folds into the HTH cro/C1-type domain. The H-T-H motif DNA-binding region spans 30 to 49 (QQAVAERLCLKVSTVRDIEE). The helical; Signal-anchor for type II membrane protein transmembrane segment at 112 to 132 (WLMSFTWLVLFVVVGLTGAWW) threads the bilayer. The Periplasmic segment spans residues 133 to 334 (WQNHKAQQEE…TLNAEPTPAQ (202 aa)). The segment at 155–241 (NADKDSGQSV…PSALPTSQAG (87 aa)) is disordered. Low complexity-rich tracts occupy residues 170 to 211 (AATS…TVVA) and 219 to 241 (TAAT…SQAG).

Belongs to the RodZ family.

Its subcellular location is the cell inner membrane. Its function is as follows. Cytoskeletal protein that is involved in cell-shape control through regulation of the length of the long axis. In Salmonella agona (strain SL483), this protein is Cytoskeleton protein RodZ.